Here is a 118-residue protein sequence, read N- to C-terminus: Small ribosomal subunit protein uS13 (118 aa).

The interval 92-118 is disordered; that stretch reads RRGLPVRGQRTKTNARTRKGPRKPIKK.

This sequence belongs to the universal ribosomal protein uS13 family. Part of the 30S ribosomal subunit. Forms a loose heterodimer with protein S19. Forms two bridges to the 50S subunit in the 70S ribosome.

Its function is as follows. Located at the top of the head of the 30S subunit, it contacts several helices of the 16S rRNA. In the 70S ribosome it contacts the 23S rRNA (bridge B1a) and protein L5 of the 50S subunit (bridge B1b), connecting the 2 subunits; these bridges are implicated in subunit movement. Contacts the tRNAs in the A and P-sites. This chain is Small ribosomal subunit protein uS13, found in Yersinia pestis.